The primary structure comprises 468 residues: Cysteine--tRNA ligase (468 aa).

Cys-28 contacts Zn(2+). The short motif at 30–40 (PTVYNYIHIGN) is the 'HIGH' region element. Cys-212, His-237, and Glu-241 together coordinate Zn(2+). The short motif at 271–275 (KMSKS) is the 'KMSKS' region element. Lys-274 contacts ATP.

It belongs to the class-I aminoacyl-tRNA synthetase family. As to quaternary structure, monomer. It depends on Zn(2+) as a cofactor.

Its subcellular location is the cytoplasm. It carries out the reaction tRNA(Cys) + L-cysteine + ATP = L-cysteinyl-tRNA(Cys) + AMP + diphosphate. This Latilactobacillus sakei subsp. sakei (strain 23K) (Lactobacillus sakei subsp. sakei) protein is Cysteine--tRNA ligase.